A 147-amino-acid chain; its full sequence is Hemoglobin subunit beta (147 aa).

The 145-residue stretch at 3–147 folds into the Globin domain; sequence NWTKTEKATI…VMSALGKQYH (145 aa). Heme b-binding residues include His64 and His93.

The protein belongs to the globin family. Heterotetramer of two alpha chains and two beta chains. As to expression, red blood cells.

In terms of biological role, involved in oxygen transport from gills to the various peripheral tissues. The chain is Hemoglobin subunit beta (hbb) from Gymnodraco acuticeps (Antarctic dragonfish).